Here is a 209-residue protein sequence, read N- to C-terminus: Mitochondrial import inner membrane translocase subunit Tim23 (209 aa).

A run of 3 helical transmembrane segments spans residues 73–93 (FELA…FGAM), 125–145 (ALWA…GVII), and 181–197 (GLTG…YNNW).

This sequence belongs to the Tim17/Tim22/Tim23 family. In terms of assembly, component of the TIM23 complex at least composed of TIMM23, TIMM17 (TIMM17A or TIMM17B) and TIMM50; within this complex, directly interacts with TIMM50. The complex interacts with the TIMM44 component of the PAM complex and with DNAJC15. Upon mitochondrial depolarization, interacts with PINK1; the interaction is required for PINK1 accumulation at the outer mitochondrial membrane, kinase activation by autophosphorylation and PRKN recruitement to mitochondria.

The protein localises to the mitochondrion inner membrane. Functionally, essential component of the TIM23 complex, a complex that mediates the translocation of transit peptide-containing proteins across the mitochondrial inner membrane. Has a role in the activation of stress-induced mitophagy by protecting PINK1 from OMA1-mediated degradation and facilitating its accumulation at the outer mitochondrial membrane in response to depolarization. In Homo sapiens (Human), this protein is Mitochondrial import inner membrane translocase subunit Tim23 (TIMM23).